The sequence spans 468 residues: Cysteine--tRNA ligase (468 aa).

Cys29 contributes to the Zn(2+) binding site. Positions 31-41 (PTVYNYIHIGN) match the 'HIGH' region motif. Zn(2+) is bound by residues Cys209, His234, and Glu238. The 'KMSKS' region motif lies at 266–270 (KMSKS). Lys269 serves as a coordination point for ATP.

It belongs to the class-I aminoacyl-tRNA synthetase family. In terms of assembly, monomer. The cofactor is Zn(2+).

The protein resides in the cytoplasm. The enzyme catalyses tRNA(Cys) + L-cysteine + ATP = L-cysteinyl-tRNA(Cys) + AMP + diphosphate. The polypeptide is Cysteine--tRNA ligase (Brevibacillus brevis (strain 47 / JCM 6285 / NBRC 100599)).